Reading from the N-terminus, the 350-residue chain is Anthranilate phosphoribosyltransferase (350 aa).

5-phospho-alpha-D-ribose 1-diphosphate-binding positions include Gly88, 91-92 (GD), Thr96, 98-101 (NIST), 116-124 (KHGGRSVSS), and Ser128. Gly88 serves as a coordination point for anthranilate. Ser100 is a binding site for Mg(2+). An anthranilate-binding site is contributed by Arg174. Positions 233 and 234 each coordinate Mg(2+).

Belongs to the anthranilate phosphoribosyltransferase family. As to quaternary structure, homodimer. It depends on Mg(2+) as a cofactor.

The catalysed reaction is N-(5-phospho-beta-D-ribosyl)anthranilate + diphosphate = 5-phospho-alpha-D-ribose 1-diphosphate + anthranilate. The protein operates within amino-acid biosynthesis; L-tryptophan biosynthesis; L-tryptophan from chorismate: step 2/5. In terms of biological role, catalyzes the transfer of the phosphoribosyl group of 5-phosphorylribose-1-pyrophosphate (PRPP) to anthranilate to yield N-(5'-phosphoribosyl)-anthranilate (PRA). This chain is Anthranilate phosphoribosyltransferase, found in Albidiferax ferrireducens (strain ATCC BAA-621 / DSM 15236 / T118) (Rhodoferax ferrireducens).